The sequence spans 219 residues: Transmembrane emp24 domain-containing protein 10 (219 aa).

The signal sequence occupies residues 1 to 31 (MSGWSGPLARRGPGPLALLFLFLLGPSSVLA). A required for interaction with STX17 region spans residues 1-142 (MSGWSGPLAR…KNYEEIAKVE (142 aa)). The Lumenal segment spans residues 32 to 185 (ISFHLPVNSR…RDTNESTNTR (154 aa)). A GOLD domain is found at 41-193 (RKCLREEIHK…TRVLYFSIFS (153 aa)). The required for TMED10 and TMED2 cis-Golgi network localization stretch occupies residues 147–178 (LEVELRRLEDLSESIVNDFAYMKKREEEMRDT). Arg171 and Arg176 each carry dimethylated arginine. An N-linked (GlcNAc...) asparagine glycan is attached at Asn179. The helical transmembrane segment at 186 to 206 (VLYFSIFSMFCLIGLATWQVF) threads the bilayer. The segment at 204 to 219 (QVFYLRRFFKAKKLIE) is interaction with COPG1. At 207-219 (YLRRFFKAKKLIE) the chain is on the cytoplasmic side. The tract at residues 207–219 (YLRRFFKAKKLIE) is interaction with ARF1 and IL1B. Residues 211-212 (FF) carry the COPII vesicle coat-binding motif. A COPI vesicle coat-binding motif is present at residues 211–219 (FFKAKKLIE).

It belongs to the EMP24/GP25L family. As to quaternary structure, predominantly dimeric and to a lesser extent monomeric in the ER. Monomer and dimer in ERGIC and cis-Golgi network. Forms homooligomer (via GOLD domain); the assembly is promoted by direct binding with leaderless cargos and may form a protein channel that facilitates cargo entry into the ERGIC. Forms heterooligomeric complexes with other members of the p24 family such as TMED2, TMED7 and TMED9. Interacts (via GOLD domain) with TMED2 (via GOLD domain); the complex is required for export of TMED10 from the ER to the cis-Golgi network; the complex is proposed to be involved in cis-Golgi network dynamics and / or biogenesis. Associates with the COPI vesicle coat subunits (coatomer). Tetramerization of the cytoplasmic domain at the Golgi membrane in vitro; the complex is proposed to interact with COPI coatomer and induce budding of the vesicles. Interacts with COPG1; the interaction involves TMED10 homodimer. Interacts with ARF1 (GDP-bound); the interaction probably involves a TMED10 oligomer. Interacts with SEC23A, SEC24B, SEC24C and SEC24D components of the coat protein complex II/COPII, indicative of an association of TMED10 with the COPII vesicle coat. Interacts with CD59. Interacts with MPPE1/PGAP5; the complex might recruit and sort GPI-anchored proteins to the ER-exit site, or the interaction might lead to recycling of PGAP5 between the ER and the Golgi. Interacts with F2LR1/PAR2. Interacts with KDELR2/ERD2; the interaction is disrupted by KDELR2 ligand. Found in a complex composed at least of SURF4, TMED2 and TMED10. Associates with the presenilin-dependent gamma-secretase complex. Interacts with STX17; the interaction is direct. Interacts with IL-1; the interaction is direct. Interacts with RAB21 (active GTP-bound form); the interaction is indirect and regulates TMED10 abundance and localization at the Golgi.

The protein localises to the endoplasmic reticulum membrane. Its subcellular location is the endoplasmic reticulum-Golgi intermediate compartment membrane. It is found in the golgi apparatus membrane. It localises to the golgi apparatus. The protein resides in the cis-Golgi network membrane. The protein localises to the trans-Golgi network membrane. Its subcellular location is the cytoplasmic vesicle. It is found in the secretory vesicle membrane. It localises to the cell membrane. The protein resides in the melanosome. Functionally, cargo receptor involved in protein vesicular trafficking and quality control in the endoplasmic reticulum (ER) and Golgi. The p24 protein family is a group of transmembrane proteins that bind coat protein complex I/COPI and coat protein complex II/COPII involved in vesicular trafficking between the membranes. Acts at the lumenal side for incorporation of secretory cargo molecules into transport vesicles and involved in vesicle coat formation at the cytoplasmic side. Mainly functions in the early secretory pathway and cycles between the ER, ER-Golgi intermediate compartment (ERGIC) and Golgi, mediating cargo transport through COPI and COPII-coated vesicles. In COPII vesicle-mediated anterograde transport, involved in the transport of GPI-anchored proteins by acting together with TMED2 as their cargo receptor; the function specifically implies SEC24C and SEC24D of the COPII vesicle coat and lipid raft-like microdomains of the ER. Recognizes GPI anchors structural remodeled in the ER by the GPI inositol-deacylase/PGAP1 and the metallophosphoesterase MPPE1/PGAP5. In COPI vesicle-mediated retrograde transport, involved in the biogenesis of COPI vesicles and vesicle coat recruitment. Involved in trafficking of amyloid beta A4 protein and soluble APP-beta release (independent from the modulation of gamma-secretase activity). Involved in the KDELR2-mediated retrograde transport of the toxin A subunit (CTX-A-K63)together with COPI and the COOH terminus of KDELR2. On Golgi membranes, acts as a primary receptor for ARF1-GDP, a GTP-binding protein involved in COPI-vesicle formation. Increases coatomer-dependent GTPase-activating activity of ARFGAP2 which mediates the hydrolysis of ARF1-bound GTP and therefore modulates protein trafficking from the Golgi apparatus. Involved in the exocytic trafficking of G protein-coupled receptors F2LR1/PAR2 (trypsin and tryspin-like enzyme receptor), OPRM1 (opioid receptor) and P2RY4 (UTD and UDP receptor) from the Golgi to the plasma membrane, thus contributing to receptor resensitization. In addition to its cargo receptor activity, may also act as a protein channel after oligomerization, facilitating the post-translational entry of leaderless cytoplasmic cargo into the ERGIC. Involved in the translocation into ERGIC, the vesicle entry and the secretion of leaderless cargos (lacking the secretion signal sequence), including the mature form of interleukin 1/IL-1 family members, the alpha-crystallin B chain HSPB5, the carbohydrate-binding proteins galectin-1/LGALS1 and galectin-3/LGALS3, the microtubule-associated protein Tau/MAPT, and the annexin A1/ANXA1; the translocation process is dependent on cargo protein unfolding and enhanced by chaperones HSP90AB1 and HSP90B1/GRP9. Could also associates with the presenilin-dependent gamma-secretase complex in order to regulate gamma-cleavages of the amyloid beta A4 protein to yield amyloid-beta 40/Abeta40. The sequence is that of Transmembrane emp24 domain-containing protein 10 (TMED10) from Oryctolagus cuniculus (Rabbit).